The following is a 127-amino-acid chain: UPF0716 protein YtzA (127 aa).

4 consecutive transmembrane segments (helical) span residues 3-22 (FLFL…FLFL), 26-46 (IGIL…AAAA), 70-90 (AIAD…PGFL), and 93-115 (LAGA…FKWL).

The protein belongs to the UPF0716 (FxsA) family.

It localises to the cell membrane. This chain is UPF0716 protein YtzA (ytzA), found in Bacillus subtilis (strain 168).